The sequence spans 321 residues: Fe-S cluster assembly protein DRE2 (321 aa).

An N-terminal SAM-like domain region spans residues 1-131; that stretch reads MERMLLLSPP…KPDFGPENIV (131 aa). Residues 132–213 form a linker region; the sequence is PLKLGKRKPV…EETLLDGEDM (82 aa). [2Fe-2S] cluster-binding residues include Cys223, Cys234, Cys237, and Cys239. The interval 223–239 is fe-S binding site A; the sequence is CRPKAGKRRRACKDCTC. 4 residues coordinate [4Fe-4S] cluster: Cys284, Cys287, Cys295, and Cys298. Short sequence motifs (cx2C motif) lie at residues 284-287 and 295-298; these read CGNC and CDGC. Residues 284–298 are fe-S binding site B; the sequence is CGNCALGDAFRCDGC.

This sequence belongs to the anamorsin family. In terms of assembly, monomer. Interacts with TAH18. Interacts with MIA40. Requires [2Fe-2S] cluster as cofactor. The cofactor is [4Fe-4S] cluster.

Its subcellular location is the cytoplasm. The protein localises to the mitochondrion intermembrane space. Component of the cytosolic iron-sulfur (Fe-S) protein assembly (CIA) machinery required for the maturation of extramitochondrial Fe-S proteins. Part of an electron transfer chain functioning in an early step of cytosolic Fe-S biogenesis, facilitating the de novo assembly of a [4Fe-4S] cluster on the scaffold complex CFD1-NBP35. Electrons are transferred to DRE2 from NADPH via the FAD- and FMN-containing protein TAH18. TAH18-DRE2 are also required for the assembly of the diferric tyrosyl radical cofactor of ribonucleotide reductase (RNR), probably by providing electrons for reduction during radical cofactor maturation in the catalytic small subunit RNR2. This chain is Fe-S cluster assembly protein DRE2, found in Coccidioides posadasii (strain C735) (Valley fever fungus).